A 331-amino-acid chain; its full sequence is Protein RecA (331 aa).

Glycine 66 to threonine 73 is an ATP binding site.

The protein belongs to the RecA family.

It localises to the cytoplasm. Its function is as follows. Can catalyze the hydrolysis of ATP in the presence of single-stranded DNA, the ATP-dependent uptake of single-stranded DNA by duplex DNA, and the ATP-dependent hybridization of homologous single-stranded DNAs. It interacts with LexA causing its activation and leading to its autocatalytic cleavage. The protein is Protein RecA of Acholeplasma laidlawii (strain PG-8A).